A 424-amino-acid polypeptide reads, in one-letter code: MSKLTIIRGFNDILPQESCKWQFLESKIKSILDKYNYDEVRLPVLEKSELFHRSVGETSDIVSKETYDFVDRSGESLTLRPEGTAGCVRMVIENSLANRGQTQKLWYSGPMFRYERPQKGRYRQFYQLGVEAYGYDNIAIDLEILTISWNLFRELGISECVKLELNSLGSSSNRQEYTKALLEYLKPYHAQLDEDSIKRLDKNPLRILDSKNEQTQQVLANAPKLIDFIDEDSLTRFEQTCEYLDNLGVNYQVNQKLVRGLDYYSGLVFEWVTDRLGAQAAVCAGGRYDNLIESLGGQKAGAIGFAIGLERLLLLLESEGKLPIEDDKSDVFFILDNNQLHRSLLLVENVRQELPALKIDMDLKFGSFKSQFKKADKSDAKIAVIIGQDELLQQAVGVKYLQQDKQQEQIPLNKLINFLEKIAI.

This sequence belongs to the class-II aminoacyl-tRNA synthetase family. As to quaternary structure, homodimer.

It is found in the cytoplasm. It carries out the reaction tRNA(His) + L-histidine + ATP = L-histidyl-tRNA(His) + AMP + diphosphate + H(+). In Francisella philomiragia subsp. philomiragia (strain ATCC 25017 / CCUG 19701 / FSC 153 / O#319-036), this protein is Histidine--tRNA ligase.